Reading from the N-terminus, the 716-residue chain is Beta-galactosidase (716 aa).

Residue glutamate 389 is the Proton donor of the active site. The Nucleophile role is filled by glutamate 462.

It belongs to the glycosyl hydrolase 2 family. As to quaternary structure, homodimer.

It catalyses the reaction Hydrolysis of terminal non-reducing beta-D-galactose residues in beta-D-galactosides.. Functionally, displays beta-galactosidase activity with the artificial chromogenic substrate o-nitrophenyl-beta-D-galactopyranoside (ONPG). This chain is Beta-galactosidase, found in Thermoanaerobacterium thermosulfurigenes (Clostridium thermosulfurogenes).